Here is a 1007-residue protein sequence, read N- to C-terminus: Serine/threonine-protein kinase atg1 (1007 aa).

Residues 30–336 (YTRLSEIGRG…FDVYFAHKVL (307 aa)) form the Protein kinase domain. ATP is bound by residues 36-44 (IGRGSFAVV) and Lys59. Asp174 (proton acceptor) is an active-site residue. 4 disordered regions span residues 343 to 489 (LVAD…KEHA), 524 to 586 (GGQA…PTSA), 795 to 817 (RLPS…GSGT), and 878 to 900 (SRPG…DGGQ). Basic and acidic residues predominate over residues 373–387 (MKRENALSGGVRDEP). Polar residues predominate over residues 396–410 (AMTQSPRPETPSTPM). Residues 477–489 (KPVEKAKDEKEHA) show a composition bias toward basic and acidic residues. Residues 534-555 (SGAAPGTPPAGGSSPHASPSKA) are compositionally biased toward low complexity. Positions 563-579 (SRADSAHVRQNSYDRRY) are enriched in basic and acidic residues. Low complexity predominate over residues 805–817 (SNLSVGSSLGSGT). Basic and acidic residues predominate over residues 887–896 (DRADARRDNE).

Belongs to the protein kinase superfamily. Ser/Thr protein kinase family. APG1/unc-51/ULK1 subfamily. As to quaternary structure, homodimer. Forms a ternary complex with ATG13 and ATG17.

It is found in the cytoplasm. The protein resides in the preautophagosomal structure membrane. It carries out the reaction L-seryl-[protein] + ATP = O-phospho-L-seryl-[protein] + ADP + H(+). It catalyses the reaction L-threonyl-[protein] + ATP = O-phospho-L-threonyl-[protein] + ADP + H(+). In terms of biological role, serine/threonine protein kinase involved in the cytoplasm to vacuole transport (Cvt) and found to be essential in autophagy, where it is required for the formation of autophagosomes. Involved in the clearance of protein aggregates which cannot be efficiently cleared by the proteasome. Required for selective autophagic degradation of the nucleus (nucleophagy) as well as for mitophagy which contributes to regulate mitochondrial quantity and quality by eliminating the mitochondria to a basal level to fulfill cellular energy requirements and preventing excess ROS production. Also involved in endoplasmic reticulum-specific autophagic process, in selective removal of ER-associated degradation (ERAD) substrates. Plays a key role in ATG9 and ATG23 cycling through the pre-autophagosomal structure and is necessary to promote ATG18 binding to ATG9 through phosphorylation of ATG9. Catalyzes phosphorylation of ATG4, decreasing the interaction between ATG4 and ATG8 and impairing deconjugation of PE-conjugated forms of ATG8. This Aspergillus niger (strain ATCC MYA-4892 / CBS 513.88 / FGSC A1513) protein is Serine/threonine-protein kinase atg1.